The primary structure comprises 164 residues: Large ribosomal subunit protein uL23 (164 aa).

The tract at residues methionine 1–valine 41 is disordered.

It belongs to the universal ribosomal protein uL23 family.

This protein binds to a specific region on the 26S rRNA. This Trypanosoma brucei brucei protein is Large ribosomal subunit protein uL23 (RPL23A).